A 378-amino-acid chain; its full sequence is Spermidine/putrescine import ATP-binding protein PotA (378 aa).

Positions 18 to 248 (VLLSGISKSF…PKNLFVAGFI (231 aa)) constitute an ABC transporter domain. 50-57 (GPSGCGKT) is a binding site for ATP.

It belongs to the ABC transporter superfamily. Spermidine/putrescine importer (TC 3.A.1.11.1) family. As to quaternary structure, the complex is composed of two ATP-binding proteins (PotA), two transmembrane proteins (PotB and PotC) and a solute-binding protein (PotD).

It is found in the cell inner membrane. It catalyses the reaction ATP + H2O + polyamine-[polyamine-binding protein]Side 1 = ADP + phosphate + polyamineSide 2 + [polyamine-binding protein]Side 1.. Part of the ABC transporter complex PotABCD involved in spermidine/putrescine import. Responsible for energy coupling to the transport system. The chain is Spermidine/putrescine import ATP-binding protein PotA from Salmonella typhi.